The sequence spans 883 residues: DNA mismatch repair protein MutS (883 aa).

Residues 1-25 (MSDSVAPDVPVIREGKNPAQHRDRT) are disordered. The span at 11–25 (VIREGKNPAQHRDRT) shows a compositional bias: basic and acidic residues. 664–671 (GPNASGKS) provides a ligand contact to ATP. The disordered stretch occupies residues 857–883 (RKGNTQPRARKSSAETEAKTQQFELPF).

This sequence belongs to the DNA mismatch repair MutS family.

Its function is as follows. This protein is involved in the repair of mismatches in DNA. It is possible that it carries out the mismatch recognition step. This protein has a weak ATPase activity. This chain is DNA mismatch repair protein MutS, found in Acaryochloris marina (strain MBIC 11017).